A 622-amino-acid chain; its full sequence is Low affinity potassium transport system protein Kup (622 aa).

12 helical membrane-spanning segments follow: residues Leu-9–Leu-29, Pro-46–Val-66, Ile-101–Pro-121, Pro-137–Ile-157, Val-165–Leu-185, Val-213–Ala-233, Trp-247–Leu-267, Pro-276–Ala-296, Ile-337–Phe-357, Leu-363–Cys-383, Phe-395–Asn-415, and Val-416–Ile-436.

Belongs to the HAK/KUP transporter (TC 2.A.72) family.

It localises to the cell inner membrane. The enzyme catalyses K(+)(in) + H(+)(in) = K(+)(out) + H(+)(out). Its function is as follows. Responsible for the low-affinity transport of potassium into the cell. Likely operates as a K(+):H(+) symporter. The sequence is that of Low affinity potassium transport system protein Kup from Yersinia pestis bv. Antiqua (strain Antiqua).